The following is a 332-amino-acid chain: Fe(3+) dicitrate transport system permease protein FecC (332 aa).

Topologically, residues methionine 1 to proline 7 are cytoplasmic. The chain crosses the membrane as a helical span at residues valine 8–cysteine 28. The Periplasmic segment spans residues tyrosine 29–serine 64. The helical transmembrane segment at leucine 65 to threonine 85 threads the bilayer. Over histidine 86 to glycine 100 the chain is Cytoplasmic. The helical transmembrane segment at alanine 101 to leucine 121 threads the bilayer. Serine 122 is a topological domain (periplasmic). A helical transmembrane segment spans residues phenylalanine 123–phenylalanine 143. Residues arginine 144 to lysine 151 lie on the Cytoplasmic side of the membrane. The chain crosses the membrane as a helical span at residues leucine 152–leucine 172. Residues leucine 173–glutamine 199 are Periplasmic-facing. A helical membrane pass occupies residues leucine 200–leucine 220. Topologically, residues leucine 221 to methionine 244 are cytoplasmic. Residues leucine 245–leucine 265 form a helical membrane-spanning segment. Over leucine 266 to proline 307 the chain is Periplasmic. The helical transmembrane segment at glycine 308–valine 328 threads the bilayer. At arginine 329–glycine 332 the chain is on the cytoplasmic side.

It belongs to the binding-protein-dependent transport system permease family. FecCD subfamily. The complex is composed of two ATP-binding proteins (FecE), two transmembrane proteins (FecC and FecD) and a solute-binding protein (FecB). Interacts with FecB.

It is found in the cell inner membrane. In terms of biological role, part of the ABC transporter complex FecBCDE involved in citrate-dependent Fe(3+) uptake. Probably responsible for the translocation of the substrate across the membrane. This Escherichia coli (strain K12) protein is Fe(3+) dicitrate transport system permease protein FecC.